Here is a 417-residue protein sequence, read N- to C-terminus: Aminoacyltransferase FemA (417 aa).

It belongs to the FemABX family.

Its subcellular location is the cytoplasm. It catalyses the reaction beta-D-GlcNAc-(1-&gt;4)-Mur2Ac(oyl-L-Ala-D-isoglutaminyl-L-Lys-(N(6)-Gly)-D-Ala-D-Ala)-di-trans,octa-cis-undecaprenyl diphosphate + 2 glycyl-tRNA(Gly) = MurNAc-L-Ala-D-isoglutaminyl-L-Lys-(N(6)-tri-Gly)-D-Ala-D-Ala-diphospho-di-trans,octa-cis-undecaprenyl-GlcNAc + 2 tRNA(Gly) + 2 H(+). Its function is as follows. Catalyzes the incorporation of amino acid(s) into the interchain peptide bridge of peptidoglycan, using aminoacyl-tRNA as amino acid donor. This chain is Aminoacyltransferase FemA (femA), found in Staphylococcus epidermidis (strain ATCC 35984 / DSM 28319 / BCRC 17069 / CCUG 31568 / BM 3577 / RP62A).